Reading from the N-terminus, the 179-residue chain is Probable chorismate pyruvate-lyase (179 aa).

Residues R82, L120, and E165 each coordinate substrate.

It belongs to the UbiC family.

It is found in the cytoplasm. The catalysed reaction is chorismate = 4-hydroxybenzoate + pyruvate. The protein operates within cofactor biosynthesis; ubiquinone biosynthesis. In terms of biological role, removes the pyruvyl group from chorismate, with concomitant aromatization of the ring, to provide 4-hydroxybenzoate (4HB) for the ubiquinone pathway. The polypeptide is Probable chorismate pyruvate-lyase (Vibrio vulnificus (strain CMCP6)).